The sequence spans 2273 residues: Acetyl-CoA carboxylase, mitochondrial (2273 aa).

Residues 1–104 (KGKTITHGQS…RGNIHKHTRL (104 aa)) constitute a mitochondrion transit peptide. The Biotin carboxylation domain occupies 134-635 (VISKILIANN…STGWLDDLIL (502 aa)). One can recognise an ATP-grasp domain in the interval 292–484 (KTNFVSVPDD…LPATQLQIAM (193 aa)). An ATP-binding site is contributed by 332–337 (GGGGKG). Arginine 459 is a catalytic residue. Residues 763 to 837 (LEAELNPTQV…EAGDVIAKLT (75 aa)) enclose the Biotinyl-binding domain. Lysine 804 is modified (N6-biotinyllysine). The region spanning 1532–1867 (PYSVKDWLQP…KRDMSPPLLE (336 aa)) is the CoA carboxyltransferase N-terminal domain. Residues 1532–2187 (PYSVKDWLQP…EGQVIKRLQK (656 aa)) form a carboxyltransferase region. Positions 1776, 2080, and 2082 each coordinate CoA. The 317-residue stretch at 1871 to 2187 (RWDRDVDFKP…EGQVIKRLQK (317 aa)) folds into the CoA carboxyltransferase C-terminal domain.

Biotin is required as a cofactor.

The protein localises to the mitochondrion. The enzyme catalyses hydrogencarbonate + acetyl-CoA + ATP = malonyl-CoA + ADP + phosphate + H(+). The catalysed reaction is N(6)-biotinyl-L-lysyl-[protein] + hydrogencarbonate + ATP = N(6)-carboxybiotinyl-L-lysyl-[protein] + ADP + phosphate + H(+). The protein operates within lipid metabolism; malonyl-CoA biosynthesis; malonyl-CoA from acetyl-CoA: step 1/1. Catalyzes the rate-limiting reaction in the mitochondrial fatty acid synthesis (FAS) type II pathway. Responsible for the production of the mitochondrial malonyl-CoA, used for the biosynthesis of the cofactor lipoic acid. This protein carries three functions: biotin carboxyl carrier protein, biotin carboxylase, and carboxyltransferase. The protein is Acetyl-CoA carboxylase, mitochondrial (HFA1) of Saccharomyces cerevisiae (strain ATCC 204508 / S288c) (Baker's yeast).